A 206-amino-acid polypeptide reads, in one-letter code: Large ribosomal subunit protein uL4 (206 aa).

Positions 48 to 75 are disordered; sequence TQSAKTRAEVSGGGIKPWRQKGTGRARQ.

Belongs to the universal ribosomal protein uL4 family. Part of the 50S ribosomal subunit.

In terms of biological role, one of the primary rRNA binding proteins, this protein initially binds near the 5'-end of the 23S rRNA. It is important during the early stages of 50S assembly. It makes multiple contacts with different domains of the 23S rRNA in the assembled 50S subunit and ribosome. Forms part of the polypeptide exit tunnel. In Clostridium botulinum (strain Loch Maree / Type A3), this protein is Large ribosomal subunit protein uL4.